The chain runs to 614 residues: Glutamine--fructose-6-phosphate aminotransferase [isomerizing] (614 aa).

Residue Cys2 is the Nucleophile; for GATase activity of the active site. The Glutamine amidotransferase type-2 domain occupies 2-223 (CGIIGYIGRR…DGEMAVVTRD (222 aa)). SIS domains lie at 292–431 (YLDR…GRTI) and 463–604 (IAVK…VDRP). Lys609 functions as the For Fru-6P isomerization activity in the catalytic mechanism.

As to quaternary structure, homodimer.

It localises to the cytoplasm. The enzyme catalyses D-fructose 6-phosphate + L-glutamine = D-glucosamine 6-phosphate + L-glutamate. In terms of biological role, catalyzes the first step in hexosamine metabolism, converting fructose-6P into glucosamine-6P using glutamine as a nitrogen source. This is Glutamine--fructose-6-phosphate aminotransferase [isomerizing] from Chlorobaculum tepidum (strain ATCC 49652 / DSM 12025 / NBRC 103806 / TLS) (Chlorobium tepidum).